The sequence spans 646 residues: Beta-mannosyltransferase 6 (646 aa).

At 1-25 the chain is on the cytoplasmic side; that stretch reads MGNYKPSIKQYVVTVKAIKSSQFGR. The chain crosses the membrane as a helical span at residues 26-46; sequence LGICAVVLLFVLGYPFYFISN. Over 47 to 646 the chain is Extracellular; that stretch reads NPFDTSIRYQ…LTGGWLPSHN (600 aa). N-linked (GlcNAc...) asparagine glycans are attached at residues Asn62, Asn81, Asn103, Asn117, Asn127, Asn132, Asn146, Asn334, and Asn393.

Belongs to the BMT family.

It is found in the membrane. Its function is as follows. Beta-mannosyltransferase involved in cell wall biosynthesis. Required for beta-1,2-mannose transfer on phospholipomannan. Required for pro-inflammatory response in macrophages through phospholipomannan-induced TNF-alpha production. The sequence is that of Beta-mannosyltransferase 6 (BMT6) from Candida albicans (strain SC5314 / ATCC MYA-2876) (Yeast).